The chain runs to 90 residues: Small ribosomal subunit protein bS20 (90 aa).

Positions 1-27 (MANSAQAKKRARQNEKRELHNASQRSA) are disordered.

Belongs to the bacterial ribosomal protein bS20 family.

Functionally, binds directly to 16S ribosomal RNA. This is Small ribosomal subunit protein bS20 from Coxiella burnetii (strain CbuK_Q154) (Coxiella burnetii (strain Q154)).